Consider the following 86-residue polypeptide: Small ribosomal subunit protein bS16 (86 aa).

It belongs to the bacterial ribosomal protein bS16 family.

The polypeptide is Small ribosomal subunit protein bS16 (Thermoanaerobacter pseudethanolicus (strain ATCC 33223 / 39E) (Clostridium thermohydrosulfuricum)).